We begin with the raw amino-acid sequence, 204 residues long: uncharacterized protein (204 aa).

The protein resides in the cytoplasm. It is found in the nucleus. This is an uncharacterized protein from Schizosaccharomyces pombe (strain 972 / ATCC 24843) (Fission yeast).